A 429-amino-acid polypeptide reads, in one-letter code: Nucleotide exchange factor Sil1 (429 aa).

The signal sequence occupies residues methionine 1–alanine 24. Asparagine 29 carries N-linked (GlcNAc...) asparagine glycosylation. Residues aspartate 70 to alanine 98 form a disordered region. Positions glycine 75–aspartate 84 are enriched in polar residues. Residues glutamine 85–asparagine 94 are compositionally biased toward basic and acidic residues. Residues aspartate 104–arginine 135 adopt a coiled-coil conformation. 3 N-linked (GlcNAc...) asparagine glycosylation sites follow: asparagine 150, asparagine 199, and asparagine 400. Residues histidine 426–leucine 429 carry the Prevents secretion from ER motif.

This sequence belongs to the SIL1 family.

The protein localises to the endoplasmic reticulum lumen. In terms of biological role, required for protein translocation and folding in the endoplasmic reticulum (ER). Functions as a nucleotide exchange factor for an ER lumenal chaperone of HSP70 family. The sequence is that of Nucleotide exchange factor Sil1 from Drosophila melanogaster (Fruit fly).